Reading from the N-terminus, the 1050-residue chain is Nuclear pore complex-interacting protein family member B3 (1050 aa).

The chain crosses the membrane as a helical span at residues 63–87 (VIIAFPTSYKVVITLWIVYLWVSLL). 3 disordered regions span residues 241–262 (NRMG…NSLS), 290–574 (LTPL…NIKT), and 785–1050 (ERLR…RRLS). The span at 252 to 262 (QQHSITDNSLS) shows a compositional bias: polar residues. Residues 349-359 (PLPPSALPSAP) show a composition bias toward pro residues. 7 stretches are compositionally biased toward basic and acidic residues: residues 406-416 (DNIKTPAERLR), 448-458 (DNIKTPAERLR), 490-500 (DNIKTPAERLR), 528-538 (DNIKTPAERLR), 820-830 (DNIKTPAERLR), 862-872 (DNIKTPAERLR), and 904-914 (DNIKTPAERLR).

Belongs to the NPIP family.

It localises to the membrane. The chain is Nuclear pore complex-interacting protein family member B3 (NPIPB3) from Homo sapiens (Human).